Reading from the N-terminus, the 1107-residue chain is Voltage-gated delayed rectifier potassium channel KCNH8 (1107 aa).

The Cytoplasmic portion of the chain corresponds to 1–225 (MPVMKGLLAP…HFSTFKAGWD (225 aa)). The 73-residue stretch at 18 to 90 (IATRFDGTHS…LQIEKSLEEK (73 aa)) folds into the PAS domain. The 53-residue stretch at 93-145 (FKGEIMFYKKNGSPFWCLLDIVPIKNEKGDVVLFLASFKDITDTKVKITPEDK) folds into the PAC domain. A helical membrane pass occupies residues 226-246 (WLILLATFYVAVTVPYNVCFI). At 247-255 (GNDDLSTTR) the chain is on the extracellular side. The helical transmembrane segment at 256-276 (STTVSDIAVEILFIIDIILNF) threads the bilayer. The Cytoplasmic segment spans residues 277 to 298 (RTTYVSKSGQVIFEARSICIHY). Residues 299 to 319 (VTTWFIIDLIAALPFDLLYAF) traverse the membrane as a helical segment. N-linked (GlcNAc...) asparagine glycosylation occurs at Asn320. Residues 320 to 327 (NVTVVSLV) lie on the Extracellular side of the membrane. A helical; Voltage-sensor membrane pass occupies residues 328 to 348 (HLLKTVRLLRLLRLLQKLDRY). The Cytoplasmic portion of the chain corresponds to 349–357 (SQHSTIVLT). The chain crosses the membrane as a helical span at residues 358-378 (LLMSMFALLAHWMACIWYVIG). Residues 379–419 (KMEREDNSLLKWEVGWLHELGKRLESPYYGNNTLGGPSIRS) are Extracellular-facing. An N-linked (GlcNAc...) asparagine glycan is attached at Asn409. An intramembrane region (pore-forming) is located at residues 420-440 (AYIAALYFTLSSLTSVGFGNV). Residues 434–439 (SVGFGN) carry the Selectivity filter motif. Over 441–448 (SANTDAEK) the chain is Extracellular. The helical transmembrane segment at 449–469 (IFSICTMLIGALMHALVFGNV) threads the bilayer. Residues 470–1107 (TAIIQRMYSR…EVKDNKAINV (638 aa)) are Cytoplasmic-facing. Positions 551-668 (LFECASRGCL…HKFVEDIQHD (118 aa)) are cNMP-binding domain. Residues 686–702 (SNKSMVSQSEPKGNGNI) show a composition bias toward polar residues. Disordered regions lie at residues 686–742 (SNKS…NKKV), 764–791 (HSPI…KRKE), 818–847 (EDGN…PPLG), and 961–989 (VDPS…YHSP). Over residues 710–724 (VEDEEEEEEGEEEEA) the composition is skewed to acidic residues. Positions 961–972 (VDPSSVGSSPQR) are enriched in polar residues.

This sequence belongs to the potassium channel family. H (Eag) (TC 1.A.1.20) subfamily. Kv12.1/KCNH8 sub-subfamily. In terms of assembly, the potassium channel is probably composed of a homo- or heterotetrameric complex of pore-forming alpha subunits that can associate with modulating beta subunits. As to expression, primarily expressed in the nervous system.

The protein resides in the membrane. The catalysed reaction is K(+)(in) = K(+)(out). In terms of biological role, pore-forming (alpha) subunit of a voltage-gated delayed rectifier potassium channel that mediates outward-rectifying potassium currents. Elicits a slowly activating, non-inactivating and slowly deactivation outwards potassium current at depolarizating voltages from -30 mV to +50mV. Shows no obvious change in the activation rate from different holding potentials. Activation is strongly dependent on the pH of the external solution. The protein is Voltage-gated delayed rectifier potassium channel KCNH8 of Homo sapiens (Human).